The sequence spans 488 residues: UDP-N-acetylmuramate--L-alanine ligase (488 aa).

Position 122–128 (122–128) interacts with ATP; that stretch reads GTHGKTT.

Belongs to the MurCDEF family.

Its subcellular location is the cytoplasm. The enzyme catalyses UDP-N-acetyl-alpha-D-muramate + L-alanine + ATP = UDP-N-acetyl-alpha-D-muramoyl-L-alanine + ADP + phosphate + H(+). It participates in cell wall biogenesis; peptidoglycan biosynthesis. Functionally, cell wall formation. The chain is UDP-N-acetylmuramate--L-alanine ligase from Mycobacterium ulcerans (strain Agy99).